A 170-amino-acid polypeptide reads, in one-letter code: Adenine phosphoribosyltransferase (170 aa).

This sequence belongs to the purine/pyrimidine phosphoribosyltransferase family. Homodimer.

Its subcellular location is the cytoplasm. The catalysed reaction is AMP + diphosphate = 5-phospho-alpha-D-ribose 1-diphosphate + adenine. Its pathway is purine metabolism; AMP biosynthesis via salvage pathway; AMP from adenine: step 1/1. In terms of biological role, catalyzes a salvage reaction resulting in the formation of AMP, that is energically less costly than de novo synthesis. In Halothermothrix orenii (strain H 168 / OCM 544 / DSM 9562), this protein is Adenine phosphoribosyltransferase.